A 189-amino-acid polypeptide reads, in one-letter code: Protein GrpE (189 aa).

The tract at residues 1-24 (MADEQNLDTQNPEAQAAENAAPSD) is disordered. The segment covering 10–24 (QNPEAQAAENAAPSD) has biased composition (low complexity).

It belongs to the GrpE family. Homodimer.

The protein localises to the cytoplasm. Its function is as follows. Participates actively in the response to hyperosmotic and heat shock by preventing the aggregation of stress-denatured proteins, in association with DnaK and GrpE. It is the nucleotide exchange factor for DnaK and may function as a thermosensor. Unfolded proteins bind initially to DnaJ; upon interaction with the DnaJ-bound protein, DnaK hydrolyzes its bound ATP, resulting in the formation of a stable complex. GrpE releases ADP from DnaK; ATP binding to DnaK triggers the release of the substrate protein, thus completing the reaction cycle. Several rounds of ATP-dependent interactions between DnaJ, DnaK and GrpE are required for fully efficient folding. This is Protein GrpE from Ectopseudomonas mendocina (strain ymp) (Pseudomonas mendocina).